Consider the following 752-residue polypeptide: Protein SEY1 homolog 1 (752 aa).

Over 1–674 (MIKNQGDRYH…QKHKQDFLQN (674 aa)) the chain is Cytoplasmic. Positions 40 to 265 (GKKYNIVSII…YEKNVRWSDM (226 aa)) constitute a GB1/RHD3-type G domain. 50–57 (GSQSTGKS) is a binding site for GTP. Residues 445-465 (NQLKSFVEAQLASFKQQLDNI) are a coiled coil. A helical transmembrane segment spans residues 675–695 (IPKPFWFLLLFFMYDDVLRWM). Residues 696–698 (GNP) lie on the Lumenal side of the membrane. A helical transmembrane segment spans residues 699–719 (LFLYPILIILCFIGFCIAIGL). Residues 720 to 752 (HSLPKLAFQTVFRTINQALLPLIFGGISKLKTS) are Cytoplasmic-facing.

This sequence belongs to the TRAFAC class dynamin-like GTPase superfamily. GB1/RHD3 GTPase family. RHD3 subfamily.

The protein resides in the endoplasmic reticulum membrane. Its function is as follows. Probable GTP-binding protein that may be involved in cell development. The polypeptide is Protein SEY1 homolog 1 (Paramecium tetraurelia).